Consider the following 331-residue polypeptide: UPF0329 protein ECU01_0080/ECU01_1530/ECU02_1560/ECU04_0090/ECU08_0010/ECU08_2090 (331 aa).

Basic and acidic residues predominate over residues 305-320 (QRSEMEKRDREQDPER). A disordered region spans residues 305–331 (QRSEMEKRDREQDPERRRLRARRVGSL). The span at 321 to 331 (RRLRARRVGSL) shows a compositional bias: basic residues.

This sequence belongs to the UPF0329 family.

This is UPF0329 protein ECU01_0080/ECU01_1530/ECU02_1560/ECU04_0090/ECU08_0010/ECU08_2090 from Encephalitozoon cuniculi (strain GB-M1) (Microsporidian parasite).